The chain runs to 123 residues: Large ribosomal subunit protein uL24 (123 aa).

The protein belongs to the universal ribosomal protein uL24 family. As to quaternary structure, part of the 50S ribosomal subunit.

In terms of biological role, one of two assembly initiator proteins, it binds directly to the 5'-end of the 23S rRNA, where it nucleates assembly of the 50S subunit. Functionally, located at the polypeptide exit tunnel on the outside of the subunit. In Methanocella arvoryzae (strain DSM 22066 / NBRC 105507 / MRE50), this protein is Large ribosomal subunit protein uL24.